Reading from the N-terminus, the 495-residue chain is Putative aldehyde dehydrogenase AldA (495 aa).

212 to 218 (GKGSESG) provides a ligand contact to NAD(+). Catalysis depends on residues Glu256 and Cys290.

Belongs to the aldehyde dehydrogenase family.

The catalysed reaction is an aldehyde + NAD(+) + H2O = a carboxylate + NADH + 2 H(+). The chain is Putative aldehyde dehydrogenase AldA (aldA) from Staphylococcus aureus (strain MSSA476).